The chain runs to 269 residues: 4-hydroxy-tetrahydrodipicolinate reductase (269 aa).

11 to 16 (GPIGRM) serves as a coordination point for NAD(+). Lysine 39 contributes to the NADP(+) binding site. Residues 101 to 103 (GTT) and 125 to 128 (ASNF) each bind NAD(+). Histidine 158 acts as the Proton donor/acceptor in catalysis. Position 159 (histidine 159) interacts with (S)-2,3,4,5-tetrahydrodipicolinate. The active-site Proton donor is the lysine 162. 168–169 (GT) lines the (S)-2,3,4,5-tetrahydrodipicolinate pocket.

Belongs to the DapB family. As to quaternary structure, homotetramer.

It localises to the cytoplasm. It catalyses the reaction (S)-2,3,4,5-tetrahydrodipicolinate + NAD(+) + H2O = (2S,4S)-4-hydroxy-2,3,4,5-tetrahydrodipicolinate + NADH + H(+). The enzyme catalyses (S)-2,3,4,5-tetrahydrodipicolinate + NADP(+) + H2O = (2S,4S)-4-hydroxy-2,3,4,5-tetrahydrodipicolinate + NADPH + H(+). The protein operates within amino-acid biosynthesis; L-lysine biosynthesis via DAP pathway; (S)-tetrahydrodipicolinate from L-aspartate: step 4/4. Its function is as follows. Catalyzes the conversion of 4-hydroxy-tetrahydrodipicolinate (HTPA) to tetrahydrodipicolinate. The polypeptide is 4-hydroxy-tetrahydrodipicolinate reductase (Buchnera aphidicola subsp. Acyrthosiphon pisum (strain APS) (Acyrthosiphon pisum symbiotic bacterium)).